Reading from the N-terminus, the 486-residue chain is Phosphomethylpyrimidine synthase (486 aa).

Residues N80, M109, Y139, H175, 195 to 197 (SRG), 236 to 239 (DSLR), and E275 each bind substrate. H279 provides a ligand contact to Zn(2+). A substrate-binding site is contributed by Y329. H370 serves as a coordination point for Zn(2+). Residues C450, C453, and C458 each contribute to the [4Fe-4S] cluster site.

This sequence belongs to the ThiC family. It depends on [4Fe-4S] cluster as a cofactor.

The enzyme catalyses 5-amino-1-(5-phospho-beta-D-ribosyl)imidazole + S-adenosyl-L-methionine = 4-amino-2-methyl-5-(phosphooxymethyl)pyrimidine + CO + 5'-deoxyadenosine + formate + L-methionine + 3 H(+). It participates in cofactor biosynthesis; thiamine diphosphate biosynthesis. In terms of biological role, catalyzes the synthesis of the hydroxymethylpyrimidine phosphate (HMP-P) moiety of thiamine from aminoimidazole ribotide (AIR) in a radical S-adenosyl-L-methionine (SAM)-dependent reaction. The protein is Phosphomethylpyrimidine synthase of Trichodesmium erythraeum (strain IMS101).